Reading from the N-terminus, the 350-residue chain is tRNA N6-adenosine threonylcarbamoyltransferase (350 aa).

Residues His-109 and His-113 each coordinate Fe cation. Substrate is bound by residues 136–140, Asp-169, Gly-182, Asp-186, and Asn-284; that span reads TVSGG. Asp-312 provides a ligand contact to Fe cation.

This sequence belongs to the KAE1 / TsaD family. The cofactor is Fe(2+).

It is found in the cytoplasm. The catalysed reaction is L-threonylcarbamoyladenylate + adenosine(37) in tRNA = N(6)-L-threonylcarbamoyladenosine(37) in tRNA + AMP + H(+). Functionally, required for the formation of a threonylcarbamoyl group on adenosine at position 37 (t(6)A37) in tRNAs that read codons beginning with adenine. Is involved in the transfer of the threonylcarbamoyl moiety of threonylcarbamoyl-AMP (TC-AMP) to the N6 group of A37, together with TsaE and TsaB. TsaD likely plays a direct catalytic role in this reaction. The protein is tRNA N6-adenosine threonylcarbamoyltransferase of Chlorobium chlorochromatii (strain CaD3).